The sequence spans 405 residues: MQIPEKYLSSVDNVEEETQILFALSKQKDADLGMLDSKQEQIALTIGNKPIKVKQSLQSLHQSRGSTGSVLWKTSVKVVPWLLQQSWFMNSLTPKTSILELGSGISGLAGILLSPFVGNYVASDKQLYLKKIRENLDQNNASDVEVHELDWKSTPYPKDWTFDFLDYVLFFDCIYNPHLNAHLVSCLASLAERYPGMQCLFAQELRDQETLVDFLERVRPYFEVDLIKMEEINKTSVASSTNLPPANMSLFIMKPYNHEEYMLKALNEAKKCEPTDSAFCVGAVIVQNGKIVSTGYSRERPGNTHAEECAIEKFMLKNPTDSLEGAIMYSTMEPCSKRLSKKVSCTDLIVKQKFSTVVLGSLEPDIFVKCEGVDLLKKAGIVVIEKLTFQDDCLREAVRGHPPKH.

One can recognise a CMP/dCMP-type deaminase domain in the interval 256-383 (YNHEEYMLKA…DLLKKAGIVV (128 aa)). His-305 provides a ligand contact to Zn(2+). Glu-307 serves as the catalytic Proton donor. Zn(2+) contacts are provided by Cys-335 and Cys-345.

This sequence belongs to the cytidine and deoxycytidylate deaminase family. The cofactor is Zn(2+).

Its subcellular location is the cytoplasm. The protein resides in the nucleus. The catalysed reaction is 2,5-diamino-6-hydroxy-4-(5-phosphoribosylamino)-pyrimidine + H2O + H(+) = 5-amino-6-(5-phospho-D-ribosylamino)uracil + NH4(+). It participates in cofactor biosynthesis; riboflavin biosynthesis; 5-amino-6-(D-ribitylamino)uracil from GTP: step 2/4. Functionally, involved in riboflavin biosynthesis. Converts 2,5-diamino-6-(ribosylamino)-4(3H)-pyrimidinone 5'-phosphate into 5-amino-6-(ribosylamino)-2,4(1H,3H)-pyrimidinedione 5'-phosphate. This chain is Diaminohydroxyphosphoribosylamino-pyrimidine deaminase, found in Schizosaccharomyces pombe (strain 972 / ATCC 24843) (Fission yeast).